Reading from the N-terminus, the 438-residue chain is Fibrinogen gamma chain (438 aa).

The N-terminal stretch at 1 to 25 (MTRLPKQGLLLLQSLALLSSAFGNI) is a signal peptide. A glycan (N-linked (GlcNAc...) asparagine) is linked at asparagine 76. The 248-residue stretch at 167–414 (QIQEFTGKDC…SVTMKIMPLN (248 aa)) folds into the Fibrinogen C-terminal domain. Cysteine 176 and cysteine 205 are oxidised to a cystine. Ca(2+)-binding residues include aspartate 341, aspartate 343, and glycine 347. Cysteine 349 and cysteine 362 are oxidised to a cystine.

Heterohexamer; disulfide linked. Contains 2 sets of 3 non-identical chains (alpha, beta and gamma). The 2 heterotrimers are in head to head conformation with the N-termini in a small central domain. Post-translationally, conversion of fibrinogen to fibrin is triggered by thrombin, which cleaves fibrinopeptides A and B from alpha and beta chains, and thus exposes the N-terminal polymerization sites responsible for the formation of the soft clot. The soft clot is converted into the hard clot by factor XIIIA which catalyzes the epsilon-(gamma-glutamyl)lysine cross-linking between gamma chains (stronger) and between alpha chains (weaker) of different monomers.

It is found in the secreted. Together with fibrinogen alpha (FGA) and fibrinogen beta (FGB), polymerizes to form an insoluble fibrin matrix. Has a major function in hemostasis as one of the primary components of blood clots. The protein is Fibrinogen gamma chain (fgg) of Xenopus laevis (African clawed frog).